The following is a 378-amino-acid chain: 3,6-diketocamphane 1,6-monooxygenase (378 aa).

FMN-binding positions include His10, Ser44, Met76, and 201–209 (TGFSYNSPS).

It belongs to the bacterial luciferase oxidoreductase family. As to quaternary structure, homodimer. Likely forms a loose transient complex with a P.putida flavin reductase that provides the required FMNH(2) to the enzyme.

It carries out the reaction (1S,4S)-bornane-2,5-dione + FMNH2 + O2 = (1S,4S)-5-oxo-1,2-campholide + FMN + H2O + H(+). Functionally, involved in the degradation and assimilation of (-)-camphor, which allows P.putida strain NCIMB 10007 to grow on this enantiomer of camphor as the sole carbon source. Catalyzes the FMNH(2)-dependent lactonization of 3,6-diketocamphane via a Baeyer-Villiger oxidation to produce the unstable lactone 5-oxo-1,2-campholide with (S,S) configuration, that presumably undergoes spontaneous hydrolysis to form 2-oxo-Delta(3)-4,5,5-trimethylcyclopentenylacetate. Is also able to convert (-)-camphor to the corresponding lactone in vitro. Shows no conversion of (+)-camphor, (+)-fenchone, (-)-fenchone, and (+)-nopinone. Acts on other bicyclic ketones but very poorly on a few 2- and 4-substituted monocyclic ketones. The protein is 3,6-diketocamphane 1,6-monooxygenase of Pseudomonas putida (Arthrobacter siderocapsulatus).